The primary structure comprises 126 residues: Aspartate 1-decarboxylase (126 aa).

S25 acts as the Schiff-base intermediate with substrate; via pyruvic acid in catalysis. S25 carries the post-translational modification Pyruvic acid (Ser). T57 contacts substrate. Y58 acts as the Proton donor in catalysis. Residue 73 to 75 (GAA) coordinates substrate.

Belongs to the PanD family. As to quaternary structure, heterooctamer of four alpha and four beta subunits. Requires pyruvate as cofactor. In terms of processing, is synthesized initially as an inactive proenzyme, which is activated by self-cleavage at a specific serine bond to produce a beta-subunit with a hydroxyl group at its C-terminus and an alpha-subunit with a pyruvoyl group at its N-terminus.

The protein localises to the cytoplasm. It carries out the reaction L-aspartate + H(+) = beta-alanine + CO2. Its pathway is cofactor biosynthesis; (R)-pantothenate biosynthesis; beta-alanine from L-aspartate: step 1/1. In terms of biological role, catalyzes the pyruvoyl-dependent decarboxylation of aspartate to produce beta-alanine. The polypeptide is Aspartate 1-decarboxylase (Cellvibrio japonicus (strain Ueda107) (Pseudomonas fluorescens subsp. cellulosa)).